The sequence spans 456 residues: Methionine aminopeptidase 2 (456 aa).

The segment covering 1-11 (MTIPVPKPAHP) has biased composition (pro residues). The interval 1–127 (MTIPVPKPAH…SYRTTSSEKR (127 aa)) is disordered. Over residues 31-45 (EADEEEDDDDEEGKE) the composition is skewed to acidic residues. Residues 66 to 79 (KKKKKKKKKPKKKK) show a composition bias toward basic residues. Substrate is bound at residue histidine 209. Residues aspartate 229, aspartate 240, and histidine 309 each contribute to the a divalent metal cation site. A substrate-binding site is contributed by histidine 317. 2 residues coordinate a divalent metal cation: glutamate 343 and glutamate 437.

This sequence belongs to the peptidase M24A family. Methionine aminopeptidase eukaryotic type 2 subfamily. It depends on Co(2+) as a cofactor. The cofactor is Zn(2+). Requires Mn(2+) as cofactor. Fe(2+) is required as a cofactor.

It is found in the cytoplasm. The enzyme catalyses Release of N-terminal amino acids, preferentially methionine, from peptides and arylamides.. Its function is as follows. Cotranslationally removes the N-terminal methionine from nascent proteins. The N-terminal methionine is often cleaved when the second residue in the primary sequence is small and uncharged (Met-Ala-, Cys, Gly, Pro, Ser, Thr, or Val). The chain is Methionine aminopeptidase 2 from Puccinia graminis f. sp. tritici (strain CRL 75-36-700-3 / race SCCL) (Black stem rust fungus).